The following is a 756-amino-acid chain: Cilium assembly protein DZIP1L (756 aa).

Residues 1–20 (MLGQFSPGEPYTTSLSSTPP) form a disordered region. Positions 10–19 (PYTTSLSSTP) are enriched in low complexity. The stretch at 108–158 (DFLSSQLAGLEERLQAATSLVQQGEGQRAELEKSLQETKQENRRRKQLIAT) forms a coiled coil. The C2H2-type zinc-finger motif lies at 171–194 (HKCQFCEKSFVNYSYLQAHVQRRH). 4 stretches are compositionally biased toward basic and acidic residues: residues 193–202 (RHPEVTDAEK), 237–262 (NLRRQQEQEQQRRREQSEKEALERWK), 319–335 (DPEKEMRENRERELRER), and 344–365 (RRKFQEAQKRHQQENKELKSEN). Disordered stretches follow at residues 193 to 212 (RHPEVTDAEKQKKRKVEEME), 233 to 262 (QQADNLRRQQEQEQQRRREQSEKEALERWK), 310 to 365 (NNAS…KSEN), 409 to 466 (KIKK…MRES), 531 to 626 (VKSL…AYIT), and 693 to 756 (IKTP…GTSA). 2 coiled-coil regions span residues 196–283 (EVTD…FLQE) and 321–416 (EKEM…LSAT). Over residues 534 to 558 (LQKSSGKPTPNTLKQRGKKTSTPLN) the composition is skewed to polar residues. Residues 560–578 (KSLRFRQDSKASDRREKSQ) show a composition bias toward basic and acidic residues. Over residues 586–598 (TPTPRSKAPPPNQ) the composition is skewed to pro residues.

This sequence belongs to the DZIP C2H2-type zinc-finger protein family.

It localises to the cytoplasm. It is found in the cytoskeleton. The protein resides in the cilium basal body. Its subcellular location is the microtubule organizing center. The protein localises to the centrosome. It localises to the centriole. Its function is as follows. Involved in primary cilium formation. Probably acts as a transition zone protein required for localization of PKD1/PC1 and PKD2/PC2 to the ciliary membrane. The chain is Cilium assembly protein DZIP1L (dzip1l) from Danio rerio (Zebrafish).